We begin with the raw amino-acid sequence, 128 residues long: Large ribosomal subunit protein bL20 (128 aa).

Belongs to the bacterial ribosomal protein bL20 family.

Its function is as follows. Binds directly to 23S ribosomal RNA and is necessary for the in vitro assembly process of the 50S ribosomal subunit. It is not involved in the protein synthesizing functions of that subunit. This chain is Large ribosomal subunit protein bL20, found in Micrococcus luteus (strain ATCC 4698 / DSM 20030 / JCM 1464 / CCM 169 / CCUG 5858 / IAM 1056 / NBRC 3333 / NCIMB 9278 / NCTC 2665 / VKM Ac-2230) (Micrococcus lysodeikticus).